The following is a 214-amino-acid chain: Redox-sensing transcriptional repressor Rex (214 aa).

The segment at residues 17–56 (LYYRIFKRFHADQVEKASSKQIADAMGIDSATVRRDFSYF) is a DNA-binding region (H-T-H motif). Position 91–96 (91–96 (GCGNIG)) interacts with NAD(+).

The protein belongs to the transcriptional regulatory Rex family. Homodimer.

It localises to the cytoplasm. In terms of biological role, modulates transcription in response to changes in cellular NADH/NAD(+) redox state. The sequence is that of Redox-sensing transcriptional repressor Rex from Streptococcus pyogenes serotype M12 (strain MGAS9429).